The primary structure comprises 191 residues: UPF0149 protein VV1_1551 (191 aa).

It belongs to the UPF0149 family.

The chain is UPF0149 protein VV1_1551 from Vibrio vulnificus (strain CMCP6).